We begin with the raw amino-acid sequence, 467 residues long: tRNA-2-methylthio-N(6)-dimethylallyladenosine synthase (467 aa).

An MTTase N-terminal domain is found at 5 to 125 (RKLHIKSYGC…LPQLLAQASR (121 aa)). [4Fe-4S] cluster contacts are provided by Cys-14, Cys-50, Cys-88, Cys-166, Cys-170, and Cys-173. The Radical SAM core domain maps to 152–384 (RARGVSAFVT…QSLIDSQQAA (233 aa)). One can recognise a TRAM domain in the interval 387–449 (KAAIGSVVDV…RYSLLGELVA (63 aa)).

Belongs to the methylthiotransferase family. MiaB subfamily. As to quaternary structure, monomer. Requires [4Fe-4S] cluster as cofactor.

Its subcellular location is the cytoplasm. It catalyses the reaction N(6)-dimethylallyladenosine(37) in tRNA + (sulfur carrier)-SH + AH2 + 2 S-adenosyl-L-methionine = 2-methylsulfanyl-N(6)-dimethylallyladenosine(37) in tRNA + (sulfur carrier)-H + 5'-deoxyadenosine + L-methionine + A + S-adenosyl-L-homocysteine + 2 H(+). Functionally, catalyzes the methylthiolation of N6-(dimethylallyl)adenosine (i(6)A), leading to the formation of 2-methylthio-N6-(dimethylallyl)adenosine (ms(2)i(6)A) at position 37 in tRNAs that read codons beginning with uridine. The protein is tRNA-2-methylthio-N(6)-dimethylallyladenosine synthase of Bradyrhizobium sp. (strain ORS 278).